A 131-amino-acid chain; its full sequence is Profilin-1 (131 aa).

The protein belongs to the profilin family. As to quaternary structure, occurs in many kinds of cells as a complex with monomeric actin in a 1:1 ratio. In terms of tissue distribution, cytoplasmic distribution in hypocotyls. In root nodules, it is found in all cells, but is more abundant in the vascular tissue as well as the endodermis.

The protein localises to the cytoplasm. It is found in the cytoskeleton. In terms of biological role, binds to actin and affects the structure of the cytoskeleton. At high concentrations, profilin prevents the polymerization of actin, whereas it enhances it at low concentrations. By binding to PIP2, it inhibits the formation of IP3 and DG. The sequence is that of Profilin-1 from Phaseolus vulgaris (Kidney bean).